A 32-amino-acid chain; its full sequence is Toxic phospholipase A2 (32 aa).

This sequence belongs to the phospholipase A2 family. Group III subfamily. It depends on Ca(2+) as a cofactor.

It is found in the secreted. Its subcellular location is the nematocyst. It catalyses the reaction a 1,2-diacyl-sn-glycero-3-phosphocholine + H2O = a 1-acyl-sn-glycero-3-phosphocholine + a fatty acid + H(+). In terms of biological role, PLA2 catalyzes the calcium-dependent hydrolysis of the 2-acyl groups in 3-sn-phosphoglycerides. In Rhopilema nomadica (Mediteranean medusa), this protein is Toxic phospholipase A2.